The sequence spans 467 residues: MPTMRNSIFSEKVYPILLSAYRWYLRTPERSLEEAYKAALNIKAIEDEHFNGNKIDFNSAIYSNSVMDYFESDLAQELKTARMRLTEFRFSRWFSNESHQKAARKAGIEYPSSTVILEKLKFIDEIISKYIITDYEIAAPSGASDLQVRTTSLQPPENPSLTDSLRNNDINKNNLVERIYTPTSPPQLIRPRTEQNKKPRGKADTTGILPRSILSTIGRLQIELDPNSEQDVINNFRQAQKRSIISIRFILLLIIVPLLTHQLSKALIVSPIFNHFKKADTEQIFLNSEMEEEALSTLHRFEERIKFENLISNAPPLSAEAIETQIKEKAEEIAAEFRGESANAIKNVFADIFSVGAFIWLLLVSKPSIMVLKEFFDNVVYGLSDSAKAFIIILFTDVFVGFHSPHGWEVILEGLSRHWGLPANRDFIFLFIATFPVILDTIFKYWIFRYLNRISPSAVATYRNMNE.

Positions 183 to 205 are disordered; the sequence is TSPPQLIRPRTEQNKKPRGKADT. Residues 191 to 203 show a composition bias toward basic and acidic residues; that stretch reads PRTEQNKKPRGKA. 4 helical membrane passes run 249–269, 352–372, 391–411, and 427–447; these read FILL…ALIV, IFSV…IMVL, IIIL…WEVI, and FIFL…KYWI.

This sequence belongs to the CemA family.

The protein localises to the cell inner membrane. Its function is as follows. Required for H(+) efflux immediately after light irradiation to form a rapid H(+) concentration gradient across the thylakoid membranes. Together with PxcL, contributes to transient H(+) uptake following dark to light transition. The protein is Proton extrusion protein PxcA of Trichormus variabilis (strain ATCC 29413 / PCC 7937) (Anabaena variabilis).